We begin with the raw amino-acid sequence, 270 residues long: ES1 protein, mitochondrial (270 aa).

Expressed specifically in the inner segments of cone photoreceptor cells of the retina (at protein level).

It localises to the mitochondrion. Functionally, plays a role in promoting mitochondrial enlargement in cone photoreceptor cells in a fusion-independent and ATP-dependent manner. This chain is ES1 protein, mitochondrial, found in Danio rerio (Zebrafish).